A 510-amino-acid chain; its full sequence is GMP synthase [glutamine-hydrolyzing] (510 aa).

One can recognise a Glutamine amidotransferase type-1 domain in the interval 5–195 (LVLVVDFGGQ…LFNVCNLKGD (191 aa)). C82 (nucleophile) is an active-site residue. Catalysis depends on residues H169 and E171. Residues 196–385 (WSMSSFAEQQ…LGIPHKLVWR (190 aa)) enclose the GMPS ATP-PPase domain. Position 223–229 (223–229 (SGGVDSS)) interacts with ATP.

In terms of assembly, homodimer.

It catalyses the reaction XMP + L-glutamine + ATP + H2O = GMP + L-glutamate + AMP + diphosphate + 2 H(+). The protein operates within purine metabolism; GMP biosynthesis; GMP from XMP (L-Gln route): step 1/1. In terms of biological role, catalyzes the synthesis of GMP from XMP. This Clostridium botulinum (strain ATCC 19397 / Type A) protein is GMP synthase [glutamine-hydrolyzing].